The primary structure comprises 345 residues: UDP-N-acetylenolpyruvoylglucosamine reductase (345 aa).

The FAD-binding PCMH-type domain occupies 27-197 (FDASAELAYE…TKVVFKLPKQ (171 aa)). R174 is a catalytic residue. Catalysis depends on S245, which acts as the Proton donor. Residue E341 is part of the active site.

The protein belongs to the MurB family. The cofactor is FAD.

It is found in the cytoplasm. The catalysed reaction is UDP-N-acetyl-alpha-D-muramate + NADP(+) = UDP-N-acetyl-3-O-(1-carboxyvinyl)-alpha-D-glucosamine + NADPH + H(+). It functions in the pathway cell wall biogenesis; peptidoglycan biosynthesis. Its function is as follows. Cell wall formation. The protein is UDP-N-acetylenolpyruvoylglucosamine reductase of Polynucleobacter asymbioticus (strain DSM 18221 / CIP 109841 / QLW-P1DMWA-1) (Polynucleobacter necessarius subsp. asymbioticus).